Reading from the N-terminus, the 319-residue chain is GTP 3',8-cyclase (319 aa).

Residues 4 to 219 (KHGRKINYLR…SKHSDLIPVE (216 aa)) form the Radical SAM core domain. R13 is a binding site for GTP. [4Fe-4S] cluster contacts are provided by C20 and C24. Y26 contributes to the S-adenosyl-L-methionine binding site. [4Fe-4S] cluster is bound at residue C27. R63 provides a ligand contact to GTP. Position 67 (G67) interacts with S-adenosyl-L-methionine. T94 contributes to the GTP binding site. S118 is an S-adenosyl-L-methionine binding site. Residue K155 participates in GTP binding. S-adenosyl-L-methionine is bound at residue M189. Residues C249 and C252 each contribute to the [4Fe-4S] cluster site. 254–256 (RVR) provides a ligand contact to GTP. C266 contacts [4Fe-4S] cluster.

The protein belongs to the radical SAM superfamily. MoaA family. Monomer and homodimer. [4Fe-4S] cluster serves as cofactor.

The catalysed reaction is GTP + AH2 + S-adenosyl-L-methionine = (8S)-3',8-cyclo-7,8-dihydroguanosine 5'-triphosphate + 5'-deoxyadenosine + L-methionine + A + H(+). The protein operates within cofactor biosynthesis; molybdopterin biosynthesis. Functionally, catalyzes the cyclization of GTP to (8S)-3',8-cyclo-7,8-dihydroguanosine 5'-triphosphate. This chain is GTP 3',8-cyclase, found in Clostridium botulinum (strain Okra / Type B1).